The following is a 169-amino-acid chain: Inorganic pyrophosphatase (169 aa).

Lys20, Arg34, and Tyr46 together coordinate substrate. Mg(2+) contacts are provided by Asp56, Asp61, and Asp93. Tyr130 serves as a coordination point for substrate.

This sequence belongs to the PPase family. In terms of assembly, homohexamer. Mg(2+) is required as a cofactor.

The protein resides in the cytoplasm. It carries out the reaction diphosphate + H2O = 2 phosphate + H(+). Functionally, catalyzes the hydrolysis of inorganic pyrophosphate (PPi) forming two phosphate ions. The sequence is that of Inorganic pyrophosphatase from Methanosarcina mazei (strain ATCC BAA-159 / DSM 3647 / Goe1 / Go1 / JCM 11833 / OCM 88) (Methanosarcina frisia).